The chain runs to 321 residues: Phosphoenolpyruvate transferase (321 aa).

Asp-51 contributes to the 7,8-didemethyl-8-hydroxy-5-deazariboflavin binding site.

It belongs to the CofD family. Homodimer. Mg(2+) serves as cofactor.

The enzyme catalyses enolpyruvoyl-2-diphospho-5'-guanosine + 7,8-didemethyl-8-hydroxy-5-deazariboflavin = dehydro coenzyme F420-0 + GMP + H(+). It participates in cofactor biosynthesis; coenzyme F420 biosynthesis. Catalyzes the transfer of the phosphoenolpyruvate moiety from enoylpyruvoyl-2-diphospho-5'-guanosine (EPPG) to 7,8-didemethyl-8-hydroxy-5-deazariboflavin (FO) with the formation of dehydro coenzyme F420-0 and GMP. In Kitasatospora aureofaciens (Streptomyces aureofaciens), this protein is Phosphoenolpyruvate transferase.